A 64-amino-acid polypeptide reads, in one-letter code: Disintegrin lebein-1-beta (64 aa).

One can recognise a Disintegrin domain in the interval 1-64 (NSGNPCCDPV…SDCPRNPYKD (64 aa)). Intrachain disulfides connect C6–C29, C20–C26, C25–C50, and C38–C57. A Cell attachment site motif is present at residues 42–44 (RGD).

The protein belongs to the disintegrin family. Dimeric disintegrin subfamily. In terms of assembly, heterodimer with subunit alpha; disulfide-linked. As to expression, expressed by the venom gland.

The protein localises to the secreted. In terms of biological role, strongly inhibits ADP-induced platelet aggregation on human platelet-rich plasma. Also avidly binds to the laminin-binding beta-1 integrins (alpha-3/beta-1, alpha-6/beta-1, and alpha-7/beta-1) in an RGD-independent manner. The sequence is that of Disintegrin lebein-1-beta from Macrovipera lebetinus (Levantine viper).